The following is a 167-amino-acid chain: SsrA-binding protein (167 aa).

Over residues 139 to 158 the composition is skewed to basic and acidic residues; the sequence is QNHDKRDAAKDRDWQRDKQR. Residues 139–167 are disordered; it reads QNHDKRDAAKDRDWQRDKQRVMRRHNRDA.

It belongs to the SmpB family.

The protein localises to the cytoplasm. Required for rescue of stalled ribosomes mediated by trans-translation. Binds to transfer-messenger RNA (tmRNA), required for stable association of tmRNA with ribosomes. tmRNA and SmpB together mimic tRNA shape, replacing the anticodon stem-loop with SmpB. tmRNA is encoded by the ssrA gene; the 2 termini fold to resemble tRNA(Ala) and it encodes a 'tag peptide', a short internal open reading frame. During trans-translation Ala-aminoacylated tmRNA acts like a tRNA, entering the A-site of stalled ribosomes, displacing the stalled mRNA. The ribosome then switches to translate the ORF on the tmRNA; the nascent peptide is terminated with the 'tag peptide' encoded by the tmRNA and targeted for degradation. The ribosome is freed to recommence translation, which seems to be the essential function of trans-translation. The protein is SsrA-binding protein of Xanthomonas axonopodis pv. citri (strain 306).